Here is a 1055-residue protein sequence, read N- to C-terminus: Cell-division control histidine kinase PdhS (1055 aa).

An important for polar localization region spans residues 1–626 (MSGSYPFIDI…RANGSEEPVD (626 aa)). The tract at residues 419–439 (DDSPVATLPKPPLDIAPTPGR) is disordered. The interval 627 to 1055 (AHLNAISWRE…AFPPTRVLAD (429 aa)) is interaction with DivK. In terms of domain architecture, PAS spans 679 to 750 (HVEELKTILD…YLHGLSGNGV (72 aa)). Residues 822-1051 (RISHEIRTPL…VVEIAFPPTR (230 aa)) enclose the Histidine kinase domain. At His825 the chain carries Phosphohistidine; by autocatalysis.

Interacts with DivK.

Its subcellular location is the cytoplasm. It carries out the reaction ATP + protein L-histidine = ADP + protein N-phospho-L-histidine.. Functions as a polar differentiation marker. Essential protein that, by localizing in the old pole of dividing cells, controls cell division and maturation, probably through control of DivK phosphorylation status and cellular distribution, which in turn regulates CtrA, a transcriptional regulator of the minB operon. The asymmetrical localization of this protein is probably required for cells to enter a new division cycle. The sequence is that of Cell-division control histidine kinase PdhS (pdhS) from Brucella anthropi (strain ATCC 49188 / DSM 6882 / CCUG 24695 / JCM 21032 / LMG 3331 / NBRC 15819 / NCTC 12168 / Alc 37) (Ochrobactrum anthropi).